The following is a 143-amino-acid chain: Putative pre-16S rRNA nuclease (143 aa).

Belongs to the YqgF nuclease family.

It is found in the cytoplasm. Functionally, could be a nuclease involved in processing of the 5'-end of pre-16S rRNA. The chain is Putative pre-16S rRNA nuclease from Salinibacter ruber (strain DSM 13855 / M31).